An 853-amino-acid chain; its full sequence is E3 ubiquitin-protein ligase ZNRF3 (853 aa).

Residues 1–28 form the signal peptide; that stretch reads MKEPRIRGGLPLVWLWVLLAVAPGESLA. Topologically, residues 29-192 are extracellular; the sequence is KETAFVEVVL…PRQPTEYFDM (164 aa). The chain crosses the membrane as a helical span at residues 193–213; sequence GIFLAFFVVVSLVCLILLIKI. Over 214–853 the chain is Cytoplasmic; it reads KLKQRRSQNS…GQDCHPTDRD (640 aa). An RING-type; atypical zinc finger spans residues 266–307; the sequence is CAICLEKYIDGEELRVIPCTHRFHKRCVDPWLLQNHTCPHCR. Disordered regions lie at residues 583–629, 650–673, 685–713, and 834–853; these read SRSP…RLSS, SSGT…RGPE, GDPS…GGLY, and TGKE…TDRD. Residues 589 to 607 show a composition bias toward gly residues; that stretch reads TGGGDAPGCGGEGGTGSGR. Residues 615–629 show a composition bias toward polar residues; it reads HQTFPNSPSRDRLSS.

It belongs to the ZNRF3 family.

The protein resides in the cell membrane. The enzyme catalyses S-ubiquitinyl-[E2 ubiquitin-conjugating enzyme]-L-cysteine + [acceptor protein]-L-lysine = [E2 ubiquitin-conjugating enzyme]-L-cysteine + N(6)-ubiquitinyl-[acceptor protein]-L-lysine.. The protein operates within protein modification; protein ubiquitination. In terms of biological role, E3 ubiquitin-protein ligase that acts as a negative regulator of the Wnt signaling pathway by mediating the ubiquitination and subsequent degradation of Wnt receptor complex components. Along with RSPO2 and RNF43, constitutes a master switch that governs limb specification. The chain is E3 ubiquitin-protein ligase ZNRF3 (znrf3) from Xenopus tropicalis (Western clawed frog).